The sequence spans 428 residues: Chaperone SurA (428 aa).

Positions 1–20 (MKNWKTLLLGIAMIANTSFA) are cleaved as a signal peptide. PpiC domains are found at residues 171 to 272 (STEL…KVND) and 282 to 382 (VTEV…ELLD).

It localises to the periplasm. It carries out the reaction [protein]-peptidylproline (omega=180) = [protein]-peptidylproline (omega=0). In terms of biological role, chaperone involved in the correct folding and assembly of outer membrane proteins. Recognizes specific patterns of aromatic residues and the orientation of their side chains, which are found more frequently in integral outer membrane proteins. May act in both early periplasmic and late outer membrane-associated steps of protein maturation. In Salmonella paratyphi A (strain ATCC 9150 / SARB42), this protein is Chaperone SurA.